A 380-amino-acid polypeptide reads, in one-letter code: Endopolygalacturonase AN8327 (380 aa).

Positions 1 to 19 (MFYALGPLALFAFATEVMA) are cleaved as a signal peptide. Residues 20-35 (TPVAYPMTTASPTLAK) constitute a propeptide that is removed on maturation. A disulfide bond links Cys-39 and Cys-57. 7 PbH1 repeats span residues 147 to 169 (LTDS…SING), 170 to 200 (CDGL…DIGE), 201 to 222 (SSNV…AVNS), 223 to 243 (GTSI…SIGS), 252 to 273 (VDTV…RIKA), 281 to 303 (IKGV…LIEQ), and 315 to 338 (TSGI…DSDG). Asp-215 acts as the Proton donor in catalysis. Cys-217 and Cys-233 are joined by a disulfide. His-237 is a catalytic residue. N-linked (GlcNAc...) asparagine glycosylation occurs at Asn-327. A disulfide bridge links Cys-345 with Cys-350. Asn-352 carries N-linked (GlcNAc...) asparagine glycosylation. A disulfide bond links Cys-369 and Cys-378.

The protein belongs to the glycosyl hydrolase 28 family.

It localises to the secreted. The enzyme catalyses (1,4-alpha-D-galacturonosyl)n+m + H2O = (1,4-alpha-D-galacturonosyl)n + (1,4-alpha-D-galacturonosyl)m.. Involved in maceration and soft-rotting of plant tissue. Hydrolyzes the 1,4-alpha glycosidic bonds of de-esterified pectate in the smooth region of the plant cell wall. The protein is Endopolygalacturonase AN8327 of Emericella nidulans (strain FGSC A4 / ATCC 38163 / CBS 112.46 / NRRL 194 / M139) (Aspergillus nidulans).